We begin with the raw amino-acid sequence, 243 residues long: CR(VI) reductase (243 aa).

Belongs to the flavin oxidoreductase frp family. Requires FMN as cofactor.

This chain is CR(VI) reductase (chrR), found in Pseudomonas sp. (strain G-1).